Here is a 980-residue protein sequence, read N- to C-terminus: MPFSLRSTSFCFLACLCSYSYGLASSPQVLTPNVIIPFKGDDIYLNGDCVFASIYAGAEQGSIISANGQNLTIVGQNHTLSFTDSQGPALQNCAFISAEEKISLRDFSSLLFSKNVSCGEKGMISGKTVSISGGDSIVFKDNSVGYSSLPSVGQTPTTPIVGDVLKGSIFCVETGLEISGVKKELVFDNTAGNFGAVFCSRAAQGDTTFTVKDCKGKILFQDNVGSCGGGVIYKGEVLFQDNEGEMLFRGNSAHDDLGILDANPQPPTEVGGGGGVICTPEKTVTFKGNKGPITFDYNFAKGRGGAIQSQTFSLVADSAVVFSNNTAEKGGGAIYALEVNVSTNGGSILFEGNRASEGGAICVSEPIAANNGGLTLHAADGDIIFSKNMTSDRPGERSAIRILDSGTNVSLNASGASKMIFYDPVVQNNPATPPTGTSGEIKINESGSGSVVFTAETLTPSEKLNVINATSNFPGNLTVSSGELVVTKGATLTVGNITATSGRVTLGSGASLSAVAGTAGTCTVSKLGIDLESFLVPTYETAKLGADTTVAVNNNPTLDLVMANETEMYDNPLFMNAVTIPFVTLVSLQTTGGVTTSAVTLNNADTAHYGYQGSWSADWRRPPLAPDPSGMTPLDKSNTLYVTWRPSSNYGVYKLDPQRRGELVPNSLWVSGSALRTFTNGLKEHYVSRDVGFIASVQALGDYVLNYKQGNRDGFLARYGGFQAVAASHYENGGIFGVAFGQLYGQTKSRLYDSKDAGNITILSCFGRSYIDVKGTETVVYWETAYGYSVHRMHTQYFNGKTNKFDHSKCRWHNNSYYAFVGAEHNFLEYCIPTRQLARDYDLTGFMRFEMSGGWSSGAKETGALPRHFDRGTGHNMSLPIGVVAHAVSNGRRSPPSKLTINMGYRPDIWRVTPHCNMKIIANGVKTPIQGSPLARHAFFLEVHDTLYVRHLGRAYMNYSLDARHRQTTHFVSLGLNRIF.

A signal peptide spans 1-24 (MPFSLRSTSFCFLACLCSYSYGLA). One can recognise an Autotransporter domain in the interval 661 to 980 (GELVPNSLWV…FVSLGLNRIF (320 aa)).

This sequence belongs to the PMP outer membrane protein family.

Its subcellular location is the secreted. The protein resides in the cell wall. It localises to the cell outer membrane. The sequence is that of Probable outer membrane protein PmpH (pmpH) from Chlamydia muridarum (strain MoPn / Nigg).